Reading from the N-terminus, the 150-residue chain is MAAPSPSTLTASLMAAKKAKGLSFADLEVALGLDEVWIASLFYGQATASPEEAEKLATLLGLDPAITAALQEFPTKGSLDPVIPTDPLIYRFYEIMQVYGMPLKDVIQEKFGDGIMSAIDFTLDVDKVEDPKGDRVKVTMCGKFLPYKKW.

Residues Arg-91, Glu-94, and Ser-117 contribute to the active site.

Belongs to the cyanase family.

It carries out the reaction cyanate + hydrogencarbonate + 3 H(+) = NH4(+) + 2 CO2. In terms of biological role, catalyzes the reaction of cyanate with bicarbonate to produce ammonia and carbon dioxide. This is Cyanate hydratase from Synechococcus sp. (strain CC9311).